A 354-amino-acid polypeptide reads, in one-letter code: Transcription factor ATOH1 (354 aa).

Residues M1–R21 are compositionally biased toward basic and acidic residues. Disordered regions lie at residues M1 to L55 and E91 to V122. The segment covering H26–P38 has biased composition (pro residues). Positions A94–R107 are enriched in basic and acidic residues. A compositionally biased stretch (low complexity) spans R108–V122. A bHLH domain is found at Q159–L211. 2 disordered regions span residues Q216–S277 and S312–S354. Over residues N250 to Q264 the composition is skewed to low complexity. The segment covering H335–S354 has biased composition (basic and acidic residues).

In terms of assembly, efficient DNA binding requires dimerization with another bHLH protein.

Its subcellular location is the nucleus. In terms of biological role, transcriptional regulator. Activates E box-dependent transcription in collaboration with TCF3/E47, but the activity is completely antagonized by the negative regulator of neurogenesis HES1. Plays a role in the differentiation of subsets of neural cells by activating E box-dependent transcription. This chain is Transcription factor ATOH1, found in Homo sapiens (Human).